A 340-amino-acid polypeptide reads, in one-letter code: uncharacterized protein (340 aa).

The segment covering 193-207 has biased composition (basic and acidic residues); the sequence is KELPKEKKKSDGDKT. The tract at residues 193 to 340 is disordered; it reads KELPKEKKKS…FIPLQPKKKI (148 aa). The span at 217–228 shows a compositional bias: low complexity; it reads FFGFWGHSGSKS. The segment covering 235–244 has biased composition (basic and acidic residues); it reads EKPIEAKNEI. 2 stretches are compositionally biased toward polar residues: residues 263–279 and 307–328; these read SDKN…SDQQ and PAQS…SLTL.

This is an uncharacterized protein from Saccharomyces cerevisiae (strain ATCC 204508 / S288c) (Baker's yeast).